A 696-amino-acid chain; its full sequence is Elongation factor G (696 aa).

Residues 8 to 290 (ERYRNIGVMA…AVLDYLPSPA (283 aa)) enclose the tr-type G domain. Residues 17 to 24 (AHIDAGKT), 88 to 92 (DTPGH), and 142 to 145 (NKMD) each bind GTP.

Belongs to the TRAFAC class translation factor GTPase superfamily. Classic translation factor GTPase family. EF-G/EF-2 subfamily.

The protein localises to the cytoplasm. In terms of biological role, catalyzes the GTP-dependent ribosomal translocation step during translation elongation. During this step, the ribosome changes from the pre-translocational (PRE) to the post-translocational (POST) state as the newly formed A-site-bound peptidyl-tRNA and P-site-bound deacylated tRNA move to the P and E sites, respectively. Catalyzes the coordinated movement of the two tRNA molecules, the mRNA and conformational changes in the ribosome. This Nitrosospira multiformis (strain ATCC 25196 / NCIMB 11849 / C 71) protein is Elongation factor G.